A 354-amino-acid chain; its full sequence is GTPase Obg (354 aa).

One can recognise an Obg domain in the interval 1 to 159; sequence MKFVDEVKIH…RDLVLELKLL (159 aa). The OBG-type G domain maps to 160–333; the sequence is ADVGIVGYPN…LLDAVGRALF (174 aa). Residues 166–173, 191–195, 212–215, 283–286, and 314–316 contribute to the GTP site; these read GYPNAGKS, FTTLT, DIPG, TKID, and SAV. Mg(2+) is bound by residues Ser-173 and Thr-193.

It belongs to the TRAFAC class OBG-HflX-like GTPase superfamily. OBG GTPase family. In terms of assembly, monomer. Mg(2+) is required as a cofactor.

It is found in the cytoplasm. In terms of biological role, an essential GTPase which binds GTP, GDP and possibly (p)ppGpp with moderate affinity, with high nucleotide exchange rates and a fairly low GTP hydrolysis rate. Plays a role in control of the cell cycle, stress response, ribosome biogenesis and in those bacteria that undergo differentiation, in morphogenesis control. The chain is GTPase Obg from Anaeromyxobacter sp. (strain K).